Reading from the N-terminus, the 440-residue chain is Ribosomal protein uS12 methylthiotransferase RimO (440 aa).

The MTTase N-terminal domain maps to 1-117 (MKVHLTSLGC…VIEAVAGKES (117 aa)). [4Fe-4S] cluster is bound by residues cysteine 10, cysteine 46, cysteine 80, cysteine 155, cysteine 159, and cysteine 162. The region spanning 141–371 (CATPHTVYVK…MTAQIDISSR (231 aa)) is the Radical SAM core domain. The TRAM domain occupies 374 to 440 (AKRVGSREPV…SAYDLTGEAQ (67 aa)).

It belongs to the methylthiotransferase family. RimO subfamily. Requires [4Fe-4S] cluster as cofactor.

The protein localises to the cytoplasm. It catalyses the reaction L-aspartate(89)-[ribosomal protein uS12]-hydrogen + (sulfur carrier)-SH + AH2 + 2 S-adenosyl-L-methionine = 3-methylsulfanyl-L-aspartate(89)-[ribosomal protein uS12]-hydrogen + (sulfur carrier)-H + 5'-deoxyadenosine + L-methionine + A + S-adenosyl-L-homocysteine + 2 H(+). Catalyzes the methylthiolation of an aspartic acid residue of ribosomal protein uS12. This is Ribosomal protein uS12 methylthiotransferase RimO from Desulfosudis oleivorans (strain DSM 6200 / JCM 39069 / Hxd3) (Desulfococcus oleovorans).